Here is a 239-residue protein sequence, read N- to C-terminus: DNA repair protein RecO (239 aa).

This sequence belongs to the RecO family.

In terms of biological role, involved in DNA repair and RecF pathway recombination. The chain is DNA repair protein RecO from Glaesserella parasuis serovar 5 (strain SH0165) (Haemophilus parasuis).